The primary structure comprises 485 residues: MATNNLSILFVASEVEGLIKSGGLADVAKALPEALQNLQQDVRITIPAYTSIERLADAEVVLETNLTSWPHTKYRVLLLTLGNNPVYLIDCDPYFNRPSMYAENNQAYTDNGERFAFFSAACLDMLPKLAFQPDIIHANDWHTGLVPFLLKHRYGNDPFFAHTKSVISIHNAVFKGVFSYDDVQCLPEFHCRNVPDAAVSATHITMLKAGVMNADKINAVSPTYAEELKTELGSHGMAWEFQQRAGDLVGILNGCDYSAWNPETDIYLPMNYSADKQSMVLGKNTCKRALQQRLNLAEKDVAMFGMVCRLTQQKGVHYLLPALADFLKHDVQVVVVGTGDPVLAAQLEEVAAQFSDKFVFVEAYDNELAHLVEAGSDFFLMPSEFEPCGLNQIYSMAYGTLPIVRGVGGLKDSVNDYDVDPCDATGFVFYEPTSQALLLTMLRALLLYAQNLTEVQRVQLHAMQKDFCWRKAAESYLQLYRSALN.

Lys-20 contacts ADP-alpha-D-glucose.

The protein belongs to the glycosyltransferase 1 family. Bacterial/plant glycogen synthase subfamily.

The catalysed reaction is [(1-&gt;4)-alpha-D-glucosyl](n) + ADP-alpha-D-glucose = [(1-&gt;4)-alpha-D-glucosyl](n+1) + ADP + H(+). It participates in glycan biosynthesis; glycogen biosynthesis. Functionally, synthesizes alpha-1,4-glucan chains using ADP-glucose. In Vibrio parahaemolyticus serotype O3:K6 (strain RIMD 2210633), this protein is Glycogen synthase.